Reading from the N-terminus, the 259-residue chain is Ribosomal RNA small subunit methyltransferase A (259 aa).

The S-adenosyl-L-methionine site is built by N13, L15, G40, E61, D85, and N103.

This sequence belongs to the class I-like SAM-binding methyltransferase superfamily. rRNA adenine N(6)-methyltransferase family. RsmA subfamily.

The protein resides in the cytoplasm. It catalyses the reaction adenosine(1518)/adenosine(1519) in 16S rRNA + 4 S-adenosyl-L-methionine = N(6)-dimethyladenosine(1518)/N(6)-dimethyladenosine(1519) in 16S rRNA + 4 S-adenosyl-L-homocysteine + 4 H(+). Specifically dimethylates two adjacent adenosines (A1518 and A1519) in the loop of a conserved hairpin near the 3'-end of 16S rRNA in the 30S particle. May play a critical role in biogenesis of 30S subunits. This is Ribosomal RNA small subunit methyltransferase A from Neisseria gonorrhoeae (strain NCCP11945).